The sequence spans 224 residues: UPF0758 protein CBUD_1789 (224 aa).

In terms of domain architecture, MPN spans 102–224; it reads QLGCTQDAQQ…SFSFAESGLL (123 aa). Zn(2+) is bound by residues histidine 173, histidine 175, and aspartate 186. The JAMM motif motif lies at 173–186; sequence HNHPSGVPDPSQAD.

Belongs to the UPF0758 family.

This is UPF0758 protein CBUD_1789 from Coxiella burnetii (strain Dugway 5J108-111).